A 239-amino-acid chain; its full sequence is uncharacterized protein (239 aa).

This is an uncharacterized protein from Saccharomyces cerevisiae (strain ATCC 204508 / S288c) (Baker's yeast).